We begin with the raw amino-acid sequence, 453 residues long: Magnesium transporter MgtE (453 aa).

The Cytoplasmic segment spans residues 1–286 (MNEGQEMEEQ…ENPLKAASKR (286 aa)). Residues Glu-71, Asp-98, Asp-102, Glu-136, Ala-140, Tyr-176, Arg-227, Asp-230, Ala-233, Asp-251, and Glu-259 each contribute to the Mg(2+) site. 2 consecutive CBS domains span residues 142 to 205 (MTTE…IADI) and 206 to 262 (LNER…EAAS). The chain crosses the membrane as a helical span at residues 287 to 307 (LPWLITLLFLGMSTASLISNY). Glu-308 is a topological domain (extracellular). Residues 309-329 (SLVSEASILAVFISLITGTAG) traverse the membrane as a helical segment. Topologically, residues 330–360 (NAGTQSLAVAVRRLAMKDEKDSNFGRLILSE) are cytoplasmic. Residues 361–381 (VLTGLVTGAVTGLTIMIVVGV) form a helical membrane-spanning segment. The Extracellular segment spans residues 382-389 (WQHNLPLG). Residues 390–410 (FVIGMAMLCAITVANLAGSLI) form a helical membrane-spanning segment. Over 411 to 427 (PMLMDKLGFDPAVASGP) the chain is Cytoplasmic. The helical transmembrane segment at 428–448 (FITTLSDLTSVLIYFNIASMF) threads the bilayer. Asp-434 serves as a coordination point for Mg(2+). The Extracellular segment spans residues 449-453 (MRYFV).

Belongs to the SLC41A transporter family. In terms of assembly, homodimer.

The protein localises to the cell membrane. The catalysed reaction is Mg(2+)(in) = Mg(2+)(out). In terms of biological role, acts as a magnesium transporter. In Enterococcus faecalis (strain ATCC 700802 / V583), this protein is Magnesium transporter MgtE.